Consider the following 1482-residue polypeptide: Cystic fibrosis transmembrane conductance regulator (1482 aa).

Topologically, residues 1 to 77 are cytoplasmic; it reads MQRSPLEKAS…KLINALQRCF (77 aa). The chain crosses the membrane as a helical span at residues 78–98; that stretch reads FWRFTFYGILLYLGEVTKAIQ. In terms of domain architecture, ABC transmembrane type-1 1 spans 81–365; sequence FTFYGILLYL…WAVQTWYDSL (285 aa). The Extracellular segment spans residues 99 to 122; the sequence is PLLLGRIIASYDPDNKMERSIAIY. Residues 123–146 traverse the membrane as a helical segment; that stretch reads LGIGLCLLFIMRTLLLHPAIFGLH. Over 147–195 the chain is Cytoplasmic; it reads HIGMQMRIALFSLIYKKTLKLSSRVLDKISIGQLVSLLSNNLNKFDEGL. A helical transmembrane segment spans residues 196–216; it reads ALAHFVWIAPLQVMLLMGLLW. Residues 217-222 lie on the Extracellular side of the membrane; the sequence is ELLQAS. A helical transmembrane segment spans residues 223 to 243; it reads AFCGLAFLIVLALLQAGLGRM. Residues 244 to 298 are Cytoplasmic-facing; that stretch reads MMKYRDQRAGKINERLVITSEMIENIQSVKAYCWEEAMEKMIENLRQTELRLTRK. The helical transmembrane segment at 299–319 threads the bilayer; it reads AAYVRYVNSSAFFFSGFFVVF. The Extracellular segment spans residues 320 to 339; sequence LSVLPYALIKGIILRKIFTT. Residues 340 to 358 form a helical membrane-spanning segment; it reads ISFCIVLRMAVTRQFPWAV. The Cytoplasmic segment spans residues 359-859; the sequence is QTWYDSLGAI…YLRYITVHKN (501 aa). Residues Trp401, 458-465, and Gln493 contribute to the ATP site; that span reads GSTGAGKT. The ABC transporter 1 domain maps to 423–646; it reads SGDNRLFFSN…RPDFSSKLMG (224 aa). A lipid anchor (S-palmitoyl cysteine) is attached at Cys524. Residues Ser549 and Ser660 each carry the phosphoserine modification. Positions 654 to 832 are disordered R region; it reads SAERRNSILT…EEINEEDLKE (179 aa). Ser670 bears the Phosphoserine; by PKA mark. A Phosphoserine modification is found at Ser686. A Glycyl lysine isopeptide (Lys-Gly) (interchain with G-Cter in ubiquitin) cross-link involves residue Lys688. Residues Ser700 and Ser712 each carry the phosphoserine modification. Thr717 carries the post-translational modification Phosphothreonine. A phosphoserine mark is found at Ser737, Ser768, Ser791, Ser796, and Ser814. A helical transmembrane segment spans residues 860-880; that stretch reads LIFVLIWCLVIFLAEVAASLV. Residues 860-1156 enclose the ABC transmembrane type-1 2 domain; that stretch reads LIFVLIWCLV…AVNSSIDVDS (297 aa). Residues 881–919 lie on the Extracellular side of the membrane; it reads AFWLIEKTRPQDKGNSTRSTNNTSPVIITSTSAFYMFYI. 2 N-linked (GlcNAc...) asparagine glycosylation sites follow: Asn895 and Asn901. A discontinuously helical transmembrane segment spans residues 920-940; that stretch reads YVGVADSLLALGFLRGLPLVH. Topologically, residues 941–991 are cytoplasmic; that stretch reads TLITVSKILHQKMLHSVLHAPMSTLNTLKAGAILNRFSKDIAILDDLLPLT. The chain crosses the membrane as a helical span at residues 992 to 1012; it reads IFDFIQLVLIVIGAVVVVSIL. Residues 1013–1014 are Extracellular-facing; that stretch reads KP. Residues 1015-1035 traverse the membrane as a helical segment; it reads YIFLAAVPVIIAFVILRAYFL. Residues 1036–1096 are Cytoplasmic-facing; it reads QTSQQLKQLE…TATWFLYLST (61 aa). Residues 1097 to 1117 form a helical membrane-spanning segment; that stretch reads LRWFQMRIEMIFVVFFVAVTF. At 1118–1131 the chain is on the extracellular side; it reads ISILTTGEGEGTVG. A helical transmembrane segment spans residues 1132 to 1152; that stretch reads IILTLAMNIMSTLQWAVNSSI. Residues 1153-1482 lie on the Cytoplasmic side of the membrane; that stretch reads DVDSLMRSVS…AEEEVQDTRL (330 aa). Residues 1212–1445 form the ABC transporter 2 domain; the sequence is ITVKDLTAKY…KSLFQQAISP (234 aa). Residues Tyr1221 and 1246-1253 each bind ATP; that span reads GRTGSGKS. The interaction with GORASP2 stretch occupies residues 1388 to 1482; the sequence is RALKQAFADC…AEEEVQDTRL (95 aa). Cys1397 is lipidated: S-palmitoyl cysteine. A phosphoserine mark is found at Ser1446 and Ser1458. Residues 1454-1482 are disordered; sequence QRSSSKHRSRAQITALKEEAEEEVQDTRL. Positions 1472 to 1482 are enriched in acidic residues; that stretch reads EAEEEVQDTRL. Positions 1480 to 1482 match the PDZ-binding motif; that stretch reads TRL.

This sequence belongs to the ABC transporter superfamily. ABCC family. CFTR transporter (TC 3.A.1.202) subfamily. Monomer; does not require oligomerization for channel activity. May form oligomers in the membrane. Interacts with SLC26A3, SLC26A6 and NHERF1. Interacts with SHANK2. Interacts with MYO6. Interacts (via C-terminus) with GOPC (via PDZ domain); this promotes CFTR internalization and thereby decreases channel activity. Interacts with SLC4A7 through NHERF1. Found in a complex with MYO5B and RAB11A. Interacts with ANO1. Interacts with SLC26A8. Interacts with AHCYL1; the interaction increases CFTR activity. Interacts with CSE1L. The core-glycosylated form interacts with GORASP2 (via PDZ GRASP-type 1 domain) in respone to ER stress. Interacts with MARCHF2; the interaction leads to CFTR ubiqtuitination and degradation. Interacts with ADGRG2. Post-translationally, N-glycosylated. Phosphorylated; cAMP treatment promotes phosphorylation and activates the channel. Dephosphorylation decreases the ATPase activity (in vitro). Phosphorylation at PKA sites activates the channel. Phosphorylation at PKC sites enhances the response to phosphorylation by PKA. Phosphorylated by AMPK; this inhibits channel activity. In terms of processing, ubiquitinated, leading to its degradation in the lysosome. Deubiquitination by USP10 in early endosomes enhances its endocytic recycling to the cell membrane. Ubiquitinated by RNF185 during ER stress. Ubiquitinated by MARCHF2.

Its subcellular location is the apical cell membrane. The protein resides in the early endosome membrane. It localises to the cell membrane. It is found in the recycling endosome membrane. The protein localises to the endoplasmic reticulum membrane. Its subcellular location is the nucleus. It catalyses the reaction ATP + H2O + closed Cl(-) channel = ADP + phosphate + open Cl(-) channel.. The catalysed reaction is chloride(in) = chloride(out). It carries out the reaction hydrogencarbonate(in) = hydrogencarbonate(out). The enzyme catalyses ATP + H2O = ADP + phosphate + H(+). Epithelial ion channel that plays an important role in the regulation of epithelial ion and water transport and fluid homeostasis. Mediates the transport of chloride ions across the cell membrane. Possesses an intrinsic ATPase activity and utilizes ATP to gate its channel; the passive flow of anions through the channel is gated by cycles of ATP binding and hydrolysis by the ATP-binding domains. The ion channel is also permeable to HCO(3)(-); selectivity depends on the extracellular chloride concentration. Exerts its function also by modulating the activity of other ion channels and transporters. Contributes to the regulation of the pH and the ion content of the epithelial fluid layer. Modulates the activity of the epithelial sodium channel (ENaC) complex, in part by regulating the cell surface expression of the ENaC complex. May regulate bicarbonate secretion and salvage in epithelial cells by regulating the transporter SLC4A7. Can inhibit the chloride channel activity of ANO1. Plays a role in the chloride and bicarbonate homeostasis during sperm epididymal maturation and capacitation. The protein is Cystic fibrosis transmembrane conductance regulator of Rhinolophus ferrumequinum (Greater horseshoe bat).